We begin with the raw amino-acid sequence, 390 residues long: Putative F-box protein At3g52320 (390 aa).

In terms of domain architecture, F-box spans 21 to 71; the sequence is VVFLPEIPEEMLIDILIRLPAKSLMRFKCVSKLWLSLITSRYFTNRFFKPS.

The protein is Putative F-box protein At3g52320 of Arabidopsis thaliana (Mouse-ear cress).